The following is a 738-amino-acid chain: Melanotransferrin (738 aa).

Positions 1–19 are cleaved as a signal peptide; the sequence is MRGPSGALWLLLALRTVLG. The segment at 20-30 is antigenic epitope; the sequence is GMEVRWCATSD. 2 consecutive Transferrin-like domains span residues 23–357 and 366–706; these read VRWC…GLLC and LRWC…GMSS. 2 cysteine pairs are disulfide-bonded: cysteine 26–cysteine 63 and cysteine 36–cysteine 54. The N-linked (GlcNAc...) asparagine glycan is linked to asparagine 38. Fe(3+) is bound by residues aspartate 78 and tyrosine 107. Disulfide bonds link cysteine 130–cysteine 216, cysteine 172–cysteine 189, cysteine 186–cysteine 199, and cysteine 257–cysteine 271. A hydrogencarbonate-binding site is contributed by threonine 132. Asparagine 135 is a glycosylation site (N-linked (GlcNAc...) asparagine). Arginine 136, valine 138, and glycine 139 together coordinate hydrogencarbonate. Tyrosine 210 lines the Fe(3+) pocket. Fe(3+) is bound by residues histidine 279, serine 421, and tyrosine 451. Residue serine 462 is modified to Phosphoserine; by FAM20C. The N-linked (GlcNAc...) asparagine glycan is linked to asparagine 515. Fe(3+) contacts are provided by tyrosine 556 and histidine 625. The GPI-anchor amidated cysteine moiety is linked to residue cysteine 709. Residues 710-738 constitute a propeptide, removed in mature form; sequence SGAAAPAPGAPLLPLLLPALAARLLPPAL.

Belongs to the transferrin family. Found predominantly in human melanomas and in certain fetal tissues; also found in liver, epithelium, umbilical chord, placenta and sweat gland ducts.

Its subcellular location is the cell membrane. Functionally, involved in iron cellular uptake. Seems to be internalized and then recycled back to the cell membrane. Binds a single atom of iron per subunit. Could also bind zinc. The chain is Melanotransferrin from Homo sapiens (Human).